Reading from the N-terminus, the 355-residue chain is S-methyl-5'-thioadenosine phosphorylase (355 aa).

Phosphate is bound by residues threonine 45, 91–92 (RH), and 124–125 (SA). Methionine 226 contacts substrate. Residue serine 227 coordinates phosphate. 250–252 (DYD) contributes to the substrate binding site.

This sequence belongs to the PNP/MTAP phosphorylase family. MTAP subfamily. Homotrimer.

The protein localises to the cytoplasm. The protein resides in the nucleus. It catalyses the reaction S-methyl-5'-thioadenosine + phosphate = 5-(methylsulfanyl)-alpha-D-ribose 1-phosphate + adenine. Its pathway is amino-acid biosynthesis; L-methionine biosynthesis via salvage pathway; S-methyl-5-thio-alpha-D-ribose 1-phosphate from S-methyl-5'-thioadenosine (phosphorylase route): step 1/1. Its function is as follows. Catalyzes the reversible phosphorylation of S-methyl-5'-thioadenosine (MTA) to adenine and 5-methylthioribose-1-phosphate. Involved in the breakdown of MTA, a major by-product of polyamine biosynthesis. Responsible for the first step in the methionine salvage pathway after MTA has been generated from S-adenosylmethionine. Has broad substrate specificity with 6-aminopurine nucleosides as preferred substrates. In Emericella nidulans (strain FGSC A4 / ATCC 38163 / CBS 112.46 / NRRL 194 / M139) (Aspergillus nidulans), this protein is S-methyl-5'-thioadenosine phosphorylase.